The primary structure comprises 366 residues: Geranylgeranyl pyrophosphate synthase, chloroplastic/chromoplastic (366 aa).

Positions 44–65 (KRTVSSSSSSSLITKEDNNLKS) are disordered. K112, R115, and H144 together coordinate isopentenyl diphosphate. Residues D151 and D157 each coordinate Mg(2+). Dimethylallyl diphosphate is bound at residue R162. Residue R163 participates in isopentenyl diphosphate binding. The dimethylallyl diphosphate site is built by K251, T252, Q289, K306, and K316.

It belongs to the FPP/GGPP synthase family. Dimer. It depends on Mg(2+) as a cofactor.

The protein resides in the plastid. The protein localises to the chloroplast stroma. Its subcellular location is the chromoplast. The catalysed reaction is isopentenyl diphosphate + dimethylallyl diphosphate = (2E)-geranyl diphosphate + diphosphate. It carries out the reaction isopentenyl diphosphate + (2E)-geranyl diphosphate = (2E,6E)-farnesyl diphosphate + diphosphate. The enzyme catalyses isopentenyl diphosphate + (2E,6E)-farnesyl diphosphate = (2E,6E,10E)-geranylgeranyl diphosphate + diphosphate. The protein operates within isoprenoid biosynthesis; farnesyl diphosphate biosynthesis; farnesyl diphosphate from geranyl diphosphate and isopentenyl diphosphate: step 1/1. It participates in isoprenoid biosynthesis; geranyl diphosphate biosynthesis; geranyl diphosphate from dimethylallyl diphosphate and isopentenyl diphosphate: step 1/1. It functions in the pathway isoprenoid biosynthesis; geranylgeranyl diphosphate biosynthesis; geranylgeranyl diphosphate from farnesyl diphosphate and isopentenyl diphosphate: step 1/1. Catalyzes the trans-addition of the three molecules of IPP onto DMAPP to form geranylgeranyl pyrophosphate. This is Geranylgeranyl pyrophosphate synthase, chloroplastic/chromoplastic (GGPS1) from Sinapis alba (White mustard).